The sequence spans 893 residues: Probable ion channel CASTOR (893 aa).

The segment at 1 to 94 (MPLDPDSSPA…APRRRDPRYA (94 aa)) is disordered. Pro residues predominate over residues 65-85 (PLPPPEQQKQQQPPPTTPPPA). The chain crosses the membrane as a helical span at residues 132–152 (TLRWSGMVSVAAIVLCFSSLV). Positions 156–178 (SSLHDQVHHLKAQLAEATTKLQS) form a coiled coil. The next 3 membrane-spanning stretches (helical) occupy residues 210 to 230 (LLLS…MDLF), 266 to 286 (LVLL…LYGV), and 318 to 338 (LVSV…LGLV). RCK N-terminal domains follow at residues 359 to 500 (QSHT…ETVV) and 619 to 792 (PERI…DYVL). Positions 389–415 (TIVVMAEKDKEEMEADIAKMEFDLKGT) form a coiled coil.

This sequence belongs to the castor/pollux (TC 1.A.1.23) family. Expressed in roots, leaves, stems and panicles.

It is found in the nucleus membrane. Required for mycorrhizal symbiosis. This chain is Probable ion channel CASTOR, found in Oryza sativa subsp. japonica (Rice).